The sequence spans 612 residues: UvrABC system protein C (612 aa).

In terms of domain architecture, GIY-YIG spans 13 to 92 (AKPGVYIMHD…IKEHRPKYNT (80 aa)). The 36-residue stretch at 204–239 (KKIMDRLTTQMQEASEKMEYEEAARYRDLLMSVKQV) folds into the UVR domain.

It belongs to the UvrC family. Interacts with UvrB in an incision complex.

Its subcellular location is the cytoplasm. In terms of biological role, the UvrABC repair system catalyzes the recognition and processing of DNA lesions. UvrC both incises the 5' and 3' sides of the lesion. The N-terminal half is responsible for the 3' incision and the C-terminal half is responsible for the 5' incision. The polypeptide is UvrABC system protein C (Lachnospira eligens (strain ATCC 27750 / DSM 3376 / VPI C15-48 / C15-B4) (Eubacterium eligens)).